Reading from the N-terminus, the 274-residue chain is Tropomyosin (274 aa).

Residues 1-35 are compositionally biased toward basic and acidic residues; sequence MKLEKDNAMDRADTLEQQNKEANNRAEKSEEEVHN. A disordered region spans residues 1-45; sequence MKLEKDNAMDRADTLEQQNKEANNRAEKSEEEVHNLQKRMQQLEN. Residues 1–274 are a coiled coil; that stretch reads MKLEKDNAMD…DQTFSELSGY (274 aa).

The protein belongs to the tropomyosin family. As to quaternary structure, homodimer.

Tropomyosin, in association with the troponin complex, plays a central role in the calcium dependent regulation of muscle contraction. This chain is Tropomyosin, found in Metapenaeus ensis (Greasyback shrimp).